The chain runs to 135 residues: ATP synthase epsilon chain (135 aa).

The interval 84 to 107 (SLSEEKQSEEQKQRLERAKKALSS) is disordered. The span at 86–102 (SEEKQSEEQKQRLERAK) shows a compositional bias: basic and acidic residues.

This sequence belongs to the ATPase epsilon chain family. As to quaternary structure, F-type ATPases have 2 components, CF(1) - the catalytic core - and CF(0) - the membrane proton channel. CF(1) has five subunits: alpha(3), beta(3), gamma(1), delta(1), epsilon(1). CF(0) has three main subunits: a, b and c.

It is found in the cell membrane. Functionally, produces ATP from ADP in the presence of a proton gradient across the membrane. The chain is ATP synthase epsilon chain from Elusimicrobium minutum (strain Pei191).